A 556-amino-acid polypeptide reads, in one-letter code: Sensory neuron membrane protein 2 (556 aa).

At 1–6 (MIHWSL) the chain is on the cytoplasmic side. A helical transmembrane segment spans residues 7–27 (IVSALGVCVAVLGGYCGWILF). Residues 28 to 522 (PNMVHKKVEQ…KLINTLKTLN (495 aa)) lie on the Extracellular side of the membrane. N-linked (GlcNAc...) asparagine glycans are attached at residues N66, N274, N310, and N324. Disulfide bonds link C320/C388 and C349/C415. A helical membrane pass occupies residues 523 to 543 (IVHWATLCGGIGVAVACLIYY). Residues 544 to 556 (IYQRGRVVEPPVK) are Cytoplasmic-facing.

This sequence belongs to the CD36 family. In terms of tissue distribution, detected in the head and to a lesser extent in legs and wings.

The protein resides in the cell membrane. Functionally, plays an olfactory role that is not restricted to pheromone sensitivity. The chain is Sensory neuron membrane protein 2 from Drosophila melanogaster (Fruit fly).